The following is a 366-amino-acid chain: Protein-glutamate methylesterase/protein-glutamine glutaminase (366 aa).

Positions 5–123 constitute a Response regulatory domain; it reads RVLVVDDSVV…SVGRSMEQVR (119 aa). Asp-56 is modified (4-aspartylphosphate). The 193-residue stretch at 163–355 folds into the CheB-type methylesterase domain; sequence PLGGHRLLVI…PEILRRLARQ (193 aa). Active-site residues include Ser-175, His-201, and Asp-297.

The protein belongs to the CheB family. Phosphorylated by CheA. Phosphorylation of the N-terminal regulatory domain activates the methylesterase activity.

It localises to the cytoplasm. It carries out the reaction [protein]-L-glutamate 5-O-methyl ester + H2O = L-glutamyl-[protein] + methanol + H(+). It catalyses the reaction L-glutaminyl-[protein] + H2O = L-glutamyl-[protein] + NH4(+). Its function is as follows. Involved in chemotaxis. Part of a chemotaxis signal transduction system that modulates chemotaxis in response to various stimuli. Catalyzes the demethylation of specific methylglutamate residues introduced into the chemoreceptors (methyl-accepting chemotaxis proteins or MCP) by CheR. Also mediates the irreversible deamidation of specific glutamine residues to glutamic acid. This Nocardioides sp. (strain ATCC BAA-499 / JS614) protein is Protein-glutamate methylesterase/protein-glutamine glutaminase.